The following is a 936-amino-acid chain: Probable outer membrane protein pmp7 (936 aa).

An N-terminal signal peptide occupies residues 1-23; that stretch reads MKSSVSWLFFSSIPLFSSLSIVA. The Autotransporter domain occupies 636–936; the sequence is GEPFERELWL…NTNLGSKFCF (301 aa).

This sequence belongs to the PMP outer membrane protein family.

It is found in the secreted. It localises to the cell wall. Its subcellular location is the cell outer membrane. The polypeptide is Probable outer membrane protein pmp7 (pmp7) (Chlamydia pneumoniae (Chlamydophila pneumoniae)).